The primary structure comprises 243 residues: Ubiquinone/menaquinone biosynthesis C-methyltransferase UbiE (243 aa).

S-adenosyl-L-methionine is bound by residues Thr69, Asp90, and 116–117 (DA).

Belongs to the class I-like SAM-binding methyltransferase superfamily. MenG/UbiE family.

It carries out the reaction a 2-demethylmenaquinol + S-adenosyl-L-methionine = a menaquinol + S-adenosyl-L-homocysteine + H(+). The enzyme catalyses a 2-methoxy-6-(all-trans-polyprenyl)benzene-1,4-diol + S-adenosyl-L-methionine = a 5-methoxy-2-methyl-3-(all-trans-polyprenyl)benzene-1,4-diol + S-adenosyl-L-homocysteine + H(+). It functions in the pathway quinol/quinone metabolism; menaquinone biosynthesis; menaquinol from 1,4-dihydroxy-2-naphthoate: step 2/2. It participates in cofactor biosynthesis; ubiquinone biosynthesis. Methyltransferase required for the conversion of demethylmenaquinol (DMKH2) to menaquinol (MKH2) and the conversion of 2-polyprenyl-6-methoxy-1,4-benzoquinol (DDMQH2) to 2-polyprenyl-3-methyl-6-methoxy-1,4-benzoquinol (DMQH2). The protein is Ubiquinone/menaquinone biosynthesis C-methyltransferase UbiE of Burkholderia cenocepacia (strain ATCC BAA-245 / DSM 16553 / LMG 16656 / NCTC 13227 / J2315 / CF5610) (Burkholderia cepacia (strain J2315)).